A 239-amino-acid polypeptide reads, in one-letter code: Glycerol-3-phosphate acyltransferase (239 aa).

The next 6 helical transmembrane spans lie at 6 to 26 (AIAL…SVMF), 61 to 81 (FLVG…SFLI), 99 to 119 (YYLT…PLYF), 135 to 155 (LAIS…VTLI), 159 to 179 (VSLA…VPWL), and 199 to 219 (WYII…VFWL).

Belongs to the PlsY family. Probably interacts with PlsX.

The protein localises to the cell membrane. It carries out the reaction an acyl phosphate + sn-glycerol 3-phosphate = a 1-acyl-sn-glycero-3-phosphate + phosphate. It functions in the pathway lipid metabolism; phospholipid metabolism. Its function is as follows. Catalyzes the transfer of an acyl group from acyl-phosphate (acyl-PO(4)) to glycerol-3-phosphate (G3P) to form lysophosphatidic acid (LPA). This enzyme utilizes acyl-phosphate as fatty acyl donor, but not acyl-CoA or acyl-ACP. The polypeptide is Glycerol-3-phosphate acyltransferase (Mycoplasma pneumoniae (strain ATCC 29342 / M129 / Subtype 1) (Mycoplasmoides pneumoniae)).